The sequence spans 244 residues: MSQLDLNALNELPKVDRVLALAETNAQLETLTAEERVVWALENLPGEYVLSSSFGIQAAVSLHLVNQIRPDIPVILTDTGYLFPETYQFIDELTDKLKLNLKVYRAGESPAWQEARYGKLWEQGVEGIEKYNDINKVEPMNRALKELNAQTWFAGLRREQSGSRAHLPVLAIQRGVFKVLPIIDWDNRTVYQYLQKHGLKYHPLWDQGYLSVGDTHTTRKWEPGMAEEETRFFGLKRECGLHEG.

The Nucleophile; cysteine thiosulfonate intermediate role is filled by Cys-239.

This sequence belongs to the PAPS reductase family. CysH subfamily.

It localises to the cytoplasm. The enzyme catalyses [thioredoxin]-disulfide + sulfite + adenosine 3',5'-bisphosphate + 2 H(+) = [thioredoxin]-dithiol + 3'-phosphoadenylyl sulfate. It participates in sulfur metabolism; hydrogen sulfide biosynthesis; sulfite from sulfate: step 3/3. Catalyzes the formation of sulfite from phosphoadenosine 5'-phosphosulfate (PAPS) using thioredoxin as an electron donor. In Salmonella schwarzengrund (strain CVM19633), this protein is Phosphoadenosine 5'-phosphosulfate reductase.